Consider the following 272-residue polypeptide: Elongation factor Ts (272 aa).

The interval 76 to 79 is involved in Mg(2+) ion dislocation from EF-Tu; that stretch reads TDFV.

This sequence belongs to the EF-Ts family.

Its subcellular location is the cytoplasm. Functionally, associates with the EF-Tu.GDP complex and induces the exchange of GDP to GTP. It remains bound to the aminoacyl-tRNA.EF-Tu.GTP complex up to the GTP hydrolysis stage on the ribosome. This Corynebacterium urealyticum (strain ATCC 43042 / DSM 7109) protein is Elongation factor Ts.